The following is a 172-amino-acid chain: MLNKREYYTKEDLLASSRGELFGKNGPTLPAPNMLMMDRVIKMTKNGGNYNKGFIEAELDIQSDMWFFNCHFIKDPVMPGCLGLDAMWQLVGFYLGWLGGEGKGRALGVKEVKFTGQILPTSKKVTYFIHFRRIINRKLIMGMADGEVSCDGKIIYTATDLKVGLFKNSTVF.

Residue His71 is part of the active site.

Belongs to the thioester dehydratase family. FabA subfamily. As to quaternary structure, homodimer.

The protein localises to the cytoplasm. The catalysed reaction is a (3R)-hydroxyacyl-[ACP] = a (2E)-enoyl-[ACP] + H2O. It catalyses the reaction (3R)-hydroxydecanoyl-[ACP] = (2E)-decenoyl-[ACP] + H2O. It carries out the reaction (2E)-decenoyl-[ACP] = (3Z)-decenoyl-[ACP]. It functions in the pathway lipid metabolism; fatty acid biosynthesis. Necessary for the introduction of cis unsaturation into fatty acids. Catalyzes the dehydration of (3R)-3-hydroxydecanoyl-ACP to E-(2)-decenoyl-ACP and then its isomerization to Z-(3)-decenoyl-ACP. Can catalyze the dehydratase reaction for beta-hydroxyacyl-ACPs with saturated chain lengths up to 16:0, being most active on intermediate chain length. This is 3-hydroxydecanoyl-[acyl-carrier-protein] dehydratase from Blochmanniella pennsylvanica (strain BPEN).